A 62-amino-acid chain; its full sequence is Photosystem II reaction center protein Z (62 aa).

2 helical membrane-spanning segments follow: residues 8–28 (AVFA…VALA) and 41–61 (FSGV…NSFI).

Belongs to the PsbZ family. In terms of assembly, PSII is composed of 1 copy each of membrane proteins PsbA, PsbB, PsbC, PsbD, PsbE, PsbF, PsbH, PsbI, PsbJ, PsbK, PsbL, PsbM, PsbT, PsbY, PsbZ, Psb30/Ycf12, at least 3 peripheral proteins of the oxygen-evolving complex and a large number of cofactors. It forms dimeric complexes.

The protein resides in the plastid. It is found in the chloroplast thylakoid membrane. Functionally, may control the interaction of photosystem II (PSII) cores with the light-harvesting antenna, regulates electron flow through the 2 photosystem reaction centers. PSII is a light-driven water plastoquinone oxidoreductase, using light energy to abstract electrons from H(2)O, generating a proton gradient subsequently used for ATP formation. In Pinus thunbergii (Japanese black pine), this protein is Photosystem II reaction center protein Z.